The following is a 187-amino-acid chain: Oleosin Zm-II (187 aa).

Alanine 2 carries the N-acetylalanine modification. Residues 2 to 51 (ADRDRSGIYGGAHATYGQQQQQGGGGRPMGEQVKKGMLHDKGPTASQALT) form a polar region. The interval 17-42 (YGQQQQQGGGGRPMGEQVKKGMLHDK) is disordered. Residues 33–42 (QVKKGMLHDK) are compositionally biased toward basic and acidic residues. The next 3 membrane-spanning stretches (helical) occupy residues 50–70 (LTVA…GLAL), 83–103 (VFLI…TAVM), and 104–124 (GFLT…CLAN). The segment at 52–123 (VATLFPLGGL…GGLSSLTCLA (72 aa)) is hydrophobic. A compositionally biased stretch (low complexity) spans 155–169 (TAQAGQAIQGRAQEA). Residues 155-187 (TAQAGQAIQGRAQEAGTGGGAGAGAGGGGRASS) are disordered. Over residues 170 to 187 (GTGGGAGAGAGGGGRASS) the composition is skewed to gly residues.

It belongs to the oleosin family. In terms of processing, the N-terminus is blocked. As to expression, found in embryonic axis, scutellum, and aleurone layer.

The protein resides in the lipid droplet. It localises to the membrane. May have a structural role to stabilize the lipid body during desiccation of the seed by preventing coalescence of the oil. Probably interacts with both lipid and phospholipid moieties of lipid bodies. May also provide recognition signals for specific lipase anchorage in lipolysis during seedling growth. The chain is Oleosin Zm-II (OLE18) from Zea mays (Maize).